Here is a 362-residue protein sequence, read N- to C-terminus: Chorismate synthase (362 aa).

2 residues coordinate NADP(+): Arg-47 and Arg-53. FMN contacts are provided by residues 124-126 (RSS), Gly-285, 300-304 (KPTAT), and Arg-326.

It belongs to the chorismate synthase family. In terms of assembly, homotetramer. Requires FMNH2 as cofactor.

The enzyme catalyses 5-O-(1-carboxyvinyl)-3-phosphoshikimate = chorismate + phosphate. The protein operates within metabolic intermediate biosynthesis; chorismate biosynthesis; chorismate from D-erythrose 4-phosphate and phosphoenolpyruvate: step 7/7. In terms of biological role, catalyzes the anti-1,4-elimination of the C-3 phosphate and the C-6 proR hydrogen from 5-enolpyruvylshikimate-3-phosphate (EPSP) to yield chorismate, which is the branch point compound that serves as the starting substrate for the three terminal pathways of aromatic amino acid biosynthesis. This reaction introduces a second double bond into the aromatic ring system. The protein is Chorismate synthase of Cyanothece sp. (strain PCC 7425 / ATCC 29141).